The chain runs to 349 residues: Pseudouridylate synthase TRUB1 (349 aa).

Position 2 is an N-acetylalanine (Ala-2). Residue Ser-11 is modified to Phosphoserine. Asp-121 acts as the Nucleophile in catalysis.

Belongs to the pseudouridine synthase TruB family. Highly expressed in heart, skeletal muscle and liver. Expressed at lower levels in lung, small intestine, kidney and spleen.

It localises to the nucleus. The protein resides in the cytoplasm. The protein localises to the cytosol. The catalysed reaction is a uridine in mRNA = a pseudouridine in mRNA. The enzyme catalyses a uridine in tRNA = a pseudouridine in tRNA. It catalyses the reaction uridine(55) in tRNA = pseudouridine(55) in tRNA. Pseudouridine synthase that catalyzes pseudouridylation of mRNAs and tRNAs. Mediates pseudouridylation of mRNAs with the consensus sequence 5'-GUUCNANNC-3', harboring a stem-loop structure. Constitutes the major pseudouridine synthase acting on mRNAs. Also catalyzes pseudouridylation of some tRNAs, including synthesis of pseudouridine(55) from uracil-55, in the psi GC loop of a subset of tRNAs. Promotes the processing of pri-let-7 microRNAs (pri-miRNAs) independently of its RNA pseudouridylate synthase activity. Acts by binding to the stem-loop structure on pri-let-7, preventing LIN28-binding (LIN28A and/or LIN28B), thereby enhancing the interaction between pri-let-7 and the microprocessor DGCR8, which mediates miRNA maturation. The protein is Pseudouridylate synthase TRUB1 of Homo sapiens (Human).